Consider the following 348-residue polypeptide: MEVFDVTIVGGGPAGLYSAFYSGLREMKTKIIDYQAELGGKVHIYPEKVIWDIGGLTPMSGENVIKQMVEQAMTFDPTVVLNEKVESIDKNEMGLFQLHTASGEIHYSKTIIVAVGGGILHPKRLNLEGAEKYEVTNLNYKITSLQRYKDKRVIISGGGNSAVDWANELVDIAKSVYLTYRKDVLSGHEAQVTKLMKSSAECYFNCSITKLISENNQSIEHVELTNHESGDILALPIDEVIINHGYDRDIDLLDNSPSLGVEIKDGYFVAGSPNSESSVPGIYAAGDILHHEGKLHLIAGAFQDAANAVNQAKKYIDPMANNFAMVSSHNEMFKERNEKLKASAAASV.

FAD is bound by residues D33, K41, Y45, V85, L120, D287, and S328.

The protein belongs to the ferredoxin--NADP reductase type 2 family. Homodimer. FAD is required as a cofactor.

The catalysed reaction is 2 reduced [2Fe-2S]-[ferredoxin] + NADP(+) + H(+) = 2 oxidized [2Fe-2S]-[ferredoxin] + NADPH. The polypeptide is Ferredoxin--NADP reductase 1 (Oceanobacillus iheyensis (strain DSM 14371 / CIP 107618 / JCM 11309 / KCTC 3954 / HTE831)).